Consider the following 176-residue polypeptide: CASP-like protein 5A1 (176 aa).

The Cytoplasmic portion of the chain corresponds to 1–35; it reads MNPSHPAVHPVEAPPTDVHHAPRVRMKDYQGMPGT. The chain crosses the membrane as a helical span at residues 36 to 56; sequence LGGLALRLGQFCFAVVAFSIM. The Extracellular segment spans residues 57-67; the sequence is LSTDDFSTVTA. A helical transmembrane segment spans residues 68 to 88; that stretch reads FCYLVAATVLQCLWSLALAVI. Residues 89–102 lie on the Cytoplasmic side of the membrane; that stretch reads DGYALLVKRSLRNS. The helical transmembrane segment at 103 to 123 threads the bilayer; it reads LVVSLFVVGDGVTATLTFAAA. Residues 124–152 lie on the Extracellular side of the membrane; sequence CASAGITVLIGNDLRECDQNHCGKYETAT. The helical transmembrane segment at 153–173 threads the bilayer; the sequence is AMAFLSWFMVSPSFLLTFWLL. Over 174–176 the chain is Cytoplasmic; the sequence is ASR.

This sequence belongs to the Casparian strip membrane proteins (CASP) family. As to quaternary structure, homodimer and heterodimers.

It is found in the cell membrane. The chain is CASP-like protein 5A1 from Ginkgo biloba (Ginkgo).